Consider the following 584-residue polypeptide: Tricyclene synthase 1e20, chloroplastic (584 aa).

The N-terminal 45 residues, 1–45 (MIYIWICFYLQTTLLPCSLSTRTKFAICHNTSKLHRAAYKTSRWN), are a transit peptide targeting the chloroplast. Asparagine 30, asparagine 209, and asparagine 322 each carry an N-linked (GlcNAc...) asparagine glycan. Aspartate 341 and aspartate 345 together coordinate Mg(2+). The DDXXD motif motif lies at 341–345 (DDIFD). N-linked (GlcNAc...) asparagine glycans are attached at residues asparagine 387 and asparagine 468. Mg(2+) is bound by residues asparagine 485, serine 489, and glutamate 493. The N-linked (GlcNAc...) asparagine glycan is linked to asparagine 512.

Belongs to the terpene synthase family. Tpsg subfamily. Mg(2+) is required as a cofactor. The cofactor is Mn(2+). In terms of tissue distribution, accumulates at low levels in flowers; mostly expressed in both upper and lower petal lobes, and, to a lower extent, in tube and stamens.

The protein localises to the plastid. The protein resides in the chloroplast stroma. It carries out the reaction (2E)-geranyl diphosphate = tricyclene + diphosphate. It catalyses the reaction (2E)-geranyl diphosphate = beta-myrcene + diphosphate. The protein operates within secondary metabolite biosynthesis; terpenoid biosynthesis. May contribute to floral scent emission. This is Tricyclene synthase 1e20, chloroplastic (1e20) from Antirrhinum majus (Garden snapdragon).